A 142-amino-acid chain; its full sequence is ATP synthase epsilon chain (142 aa).

This sequence belongs to the ATPase epsilon chain family. As to quaternary structure, F-type ATPases have 2 components, CF(1) - the catalytic core - and CF(0) - the membrane proton channel. CF(1) has five subunits: alpha(3), beta(3), gamma(1), delta(1), epsilon(1). CF(0) has three main subunits: a, b and c.

Its subcellular location is the cell inner membrane. Functionally, produces ATP from ADP in the presence of a proton gradient across the membrane. This chain is ATP synthase epsilon chain, found in Shewanella piezotolerans (strain WP3 / JCM 13877).